A 569-amino-acid chain; its full sequence is MMANKITRQAYAEMFGPTTGDRMRLADTELIIEVEKDYTIYGEEVKFGGGKVIRDGMGQGQRLSAETVDTVITNALIVDAVTGIVKADIGLKEGRIAAIGKAGNPDIQPGVTIVIGPGTEVIAGEGMIVTAGGIDSHIHFICPQQIDEALYSGVTTMIGGGTGPATGTFATTCTPGPWHIHRMLEAADAFPMNLGFLGKGNASLPEALREQVEAGVMGLKLHEDWGTTPAAIDCCLTVADEMDVQVAIHSDTLNESGFVEATLGAFKGRTIHTFHTEGAGGGHAPDIIKAAGLPNVLPSSTNPTMPYTVNTIDEHLDMLMVCHHLDPSIAEDIAFAESRIRRETIAAEDILHDLGAFSMMSSDSQAMGRVGEVIIRTWQAAHKMKLQRGALPEDSARNDNFRVKRYIAKYTINPALTHGIAHTVGSVEVGKLADLVLWKPAFFGVKPSLILKGGMIAAAAMGDPNASIPTPQPVHYRPMFGSFGKALKTSVTFISQAALNNPAIAALGLSKPLVAVSGTRTLTKADMVHNGATPEITVDPETYVVKADGVHLVCEPATELPLAQRYFLF.

One can recognise a Urease domain in the interval 132-569 (GGIDSHIHFI…LPLAQRYFLF (438 aa)). Ni(2+) is bound by residues histidine 137, histidine 139, and lysine 220. N6-carboxylysine is present on lysine 220. Histidine 222 is a substrate binding site. Residues histidine 249 and histidine 275 each contribute to the Ni(2+) site. The Proton donor role is filled by histidine 323. Aspartate 363 contacts Ni(2+).

The protein belongs to the metallo-dependent hydrolases superfamily. Urease alpha subunit family. In terms of assembly, heterotrimer of UreA (gamma), UreB (beta) and UreC (alpha) subunits. Three heterotrimers associate to form the active enzyme. Ni cation serves as cofactor. Post-translationally, carboxylation allows a single lysine to coordinate two nickel ions.

Its subcellular location is the cytoplasm. It carries out the reaction urea + 2 H2O + H(+) = hydrogencarbonate + 2 NH4(+). It participates in nitrogen metabolism; urea degradation; CO(2) and NH(3) from urea (urease route): step 1/1. The sequence is that of Urease subunit alpha from Dechloromonas aromatica (strain RCB).